Here is a 63-residue protein sequence, read N- to C-terminus: Large ribosomal subunit protein uL29 (63 aa).

This sequence belongs to the universal ribosomal protein uL29 family.

This Erwinia tasmaniensis (strain DSM 17950 / CFBP 7177 / CIP 109463 / NCPPB 4357 / Et1/99) protein is Large ribosomal subunit protein uL29.